A 369-amino-acid polypeptide reads, in one-letter code: MKRLTVHTAEKAQQYPILIAPDLIKNASLWHLYCSAPHIAIITNETVAPLYLSSLKAALTDKKVIDIILLDGECHKNLATYQHILTTLLEAHLGRDGLLIALGGGVINDITGFVAATYQRGICWITFPTTLLAQVDAAVGGKTGVNHACGKNMIGAFYPPQAVLMDTATLSTLPPREFSAGLAEVIKYALIYDISFLSWLEQHMDAVLRKEKISLENMIMNCCRYKSEIVCADEREQGMRALLNFGHTFGHALETITAYRHWLHGEAVAIGMRMAAELSEMRGLISADEKARVISLLQRAHLPTAIDIQLNCEDIYQTLFLDKKVRAGQLRFVLLSGLGQAHVVDDVTETEIFAVIAASRSENESFARF.

Residues 71-76 (DGECHK), 105-109 (GVIND), 129-130 (TT), Lys142, Lys151, and 169-172 (TLST) contribute to the NAD(+) site. Zn(2+) is bound by residues Glu184, His247, and His264.

It belongs to the sugar phosphate cyclases superfamily. Dehydroquinate synthase family. It depends on Co(2+) as a cofactor. Requires Zn(2+) as cofactor. NAD(+) is required as a cofactor.

It is found in the cytoplasm. The catalysed reaction is 7-phospho-2-dehydro-3-deoxy-D-arabino-heptonate = 3-dehydroquinate + phosphate. The protein operates within metabolic intermediate biosynthesis; chorismate biosynthesis; chorismate from D-erythrose 4-phosphate and phosphoenolpyruvate: step 2/7. In terms of biological role, catalyzes the conversion of 3-deoxy-D-arabino-heptulosonate 7-phosphate (DAHP) to dehydroquinate (DHQ). The polypeptide is 3-dehydroquinate synthase (Dichelobacter nodosus (strain VCS1703A)).